The sequence spans 255 residues: MAVISMKQLLEAGVHFGHQTRRWNPKMAKYIFTERNGIHVIDLQQTVKMVDTAYEFVREAAANDAVILFVGTKKQAAEAVAEEATRAGQYYINHRWLGGTLTNWNTIKKRIARLKEIKQMEADGTFEVLPKKEVALLNKQRARLEKFLGGIEDMPRIPDVIYIVDPHKEQIAVKEAKKLGIPVVAMVDTNADPDEIDVIIPANDDAIRAVKLITSKMADAIIEGNQGEDASADFQEAAAADSIEEIVEVVEGDNN.

It belongs to the universal ribosomal protein uS2 family.

In Streptococcus thermophilus (strain CNRZ 1066), this protein is Small ribosomal subunit protein uS2.